A 262-amino-acid chain; its full sequence is MRIGIFDSGLGGLSVLNEALSKLSEHEFLYYADVKNVPYGQKSRDEILKFSFDAVKFLVKNGAKAVVVACNTATSVAIKELRANLSVPIIGMEPAVKKAHDLSHDDALKTLVIATPVTVNGAKLKELIINLNAKDKTELLALPRLVNFAEKAEFESENVKSYLKEELVKFDLSKFDFLVLGCTHFNYFKDSLREILPPNVSIIDGNEGTIKRLISELGLKISSVNLTPNVKFFYSGEEVCEQNELEKISRNLARLEKMRAIC.

Residues 7–8 (DS) and 39–40 (YG) contribute to the substrate site. Cys-70 (proton donor/acceptor) is an active-site residue. A substrate-binding site is contributed by 71–72 (NT). Cys-182 serves as the catalytic Proton donor/acceptor. 183–184 (TH) lines the substrate pocket.

It belongs to the aspartate/glutamate racemases family.

It carries out the reaction L-glutamate = D-glutamate. The protein operates within cell wall biogenesis; peptidoglycan biosynthesis. Its function is as follows. Provides the (R)-glutamate required for cell wall biosynthesis. The protein is Glutamate racemase of Campylobacter concisus (strain 13826).